The following is a 284-amino-acid chain: NAD kinase (284 aa).

Aspartate 70 functions as the Proton acceptor in the catalytic mechanism. Residues 70 to 71 (DG), 139 to 140 (NE), lysine 167, aspartate 169, leucine 177, 180 to 185 (TAYNLS), and glutamine 236 contribute to the NAD(+) site.

The protein belongs to the NAD kinase family. A divalent metal cation serves as cofactor.

It is found in the cytoplasm. It catalyses the reaction NAD(+) + ATP = ADP + NADP(+) + H(+). Its function is as follows. Involved in the regulation of the intracellular balance of NAD and NADP, and is a key enzyme in the biosynthesis of NADP. Catalyzes specifically the phosphorylation on 2'-hydroxyl of the adenosine moiety of NAD to yield NADP. This is NAD kinase from Helicobacter pylori (strain HPAG1).